The sequence spans 632 residues: 1-deoxy-D-xylulose-5-phosphate synthase (632 aa).

Residues His-87 and 128–130 (GHS) contribute to the thiamine diphosphate site. Residue Asp-159 coordinates Mg(2+). Thiamine diphosphate is bound by residues 160–161 (GA), Asn-188, Phe-295, and Glu-377. Mg(2+) is bound at residue Asn-188.

Belongs to the transketolase family. DXPS subfamily. As to quaternary structure, homodimer. Mg(2+) serves as cofactor. It depends on thiamine diphosphate as a cofactor.

It carries out the reaction D-glyceraldehyde 3-phosphate + pyruvate + H(+) = 1-deoxy-D-xylulose 5-phosphate + CO2. Its pathway is metabolic intermediate biosynthesis; 1-deoxy-D-xylulose 5-phosphate biosynthesis; 1-deoxy-D-xylulose 5-phosphate from D-glyceraldehyde 3-phosphate and pyruvate: step 1/1. Functionally, catalyzes the acyloin condensation reaction between C atoms 2 and 3 of pyruvate and glyceraldehyde 3-phosphate to yield 1-deoxy-D-xylulose-5-phosphate (DXP). The protein is 1-deoxy-D-xylulose-5-phosphate synthase of Stutzerimonas stutzeri (strain A1501) (Pseudomonas stutzeri).